The sequence spans 335 residues: Large ribosomal subunit protein uL3 (335 aa).

The interval 1–20 (MATIHRPRRGSLAFSPRKRA) is disordered.

This sequence belongs to the universal ribosomal protein uL3 family. As to quaternary structure, part of the 50S ribosomal subunit. Forms a cluster with proteins L14 and L24e.

Its function is as follows. One of the primary rRNA binding proteins, it binds directly near the 3'-end of the 23S rRNA, where it nucleates assembly of the 50S subunit. This chain is Large ribosomal subunit protein uL3 (rpl3), found in Methanothrix harundinacea (strain 6Ac) (Methanosaeta harundinacea).